The primary structure comprises 363 residues: Pyrimidine monooxygenase RutA (363 aa).

FMN-binding positions include Ile-49 to Lys-50, Asn-115, Glu-124, Arg-140 to Tyr-141, and Ser-190.

It belongs to the NtaA/SnaA/DszA monooxygenase family. RutA subfamily.

The catalysed reaction is uracil + FMNH2 + NADH + O2 = (Z)-3-ureidoacrylate + FMN + NAD(+) + H2O + H(+). It catalyses the reaction thymine + FMNH2 + NADH + O2 = (Z)-2-methylureidoacrylate + FMN + NAD(+) + H2O + H(+). Catalyzes the pyrimidine ring opening between N-3 and C-4 by an unusual flavin hydroperoxide-catalyzed mechanism, adding oxygen atoms in the process to yield ureidoacrylate peracid, that immediately reacts with FMN forming ureidoacrylate and FMN-N(5)-oxide. The FMN-N(5)-oxide reacts spontaneously with NADH to produce FMN. Requires the flavin reductase RutF to regenerate FMN in vivo. This Escherichia coli (strain SMS-3-5 / SECEC) protein is Pyrimidine monooxygenase RutA.